The chain runs to 182 residues: tRNA-splicing endonuclease (182 aa).

Catalysis depends on residues Tyr-119, His-127, and Lys-158.

The protein belongs to the tRNA-intron endonuclease family. Archaeal short subfamily. In terms of assembly, homotetramer; although the tetramer contains four active sites, only two participate in the cleavage. Therefore, it should be considered as a dimer of dimers.

It carries out the reaction pretRNA = a 3'-half-tRNA molecule with a 5'-OH end + a 5'-half-tRNA molecule with a 2',3'-cyclic phosphate end + an intron with a 2',3'-cyclic phosphate and a 5'-hydroxyl terminus.. In terms of biological role, endonuclease that removes tRNA introns. Cleaves pre-tRNA at the 5'- and 3'-splice sites to release the intron. The products are an intron and two tRNA half-molecules bearing 2',3' cyclic phosphate and 5'-OH termini. Recognizes a pseudosymmetric substrate in which 2 bulged loops of 3 bases are separated by a stem of 4 bp. The chain is tRNA-splicing endonuclease from Saccharolobus islandicus (strain Y.N.15.51 / Yellowstone #2) (Sulfolobus islandicus).